The following is a 116-amino-acid chain: Ribosome-binding factor A (116 aa).

It belongs to the RbfA family. In terms of assembly, monomer. Binds 30S ribosomal subunits, but not 50S ribosomal subunits or 70S ribosomes.

The protein localises to the cytoplasm. In terms of biological role, one of several proteins that assist in the late maturation steps of the functional core of the 30S ribosomal subunit. Associates with free 30S ribosomal subunits (but not with 30S subunits that are part of 70S ribosomes or polysomes). Required for efficient processing of 16S rRNA. May interact with the 5'-terminal helix region of 16S rRNA. The chain is Ribosome-binding factor A from Streptococcus pyogenes serotype M3 (strain SSI-1).